The following is a 497-amino-acid chain: Bypass of stop codon protein 6 (497 aa).

The Lumenal portion of the chain corresponds to 1 to 72; that stretch reads MDASSVPPKV…KVKTYPLNYQ (72 aa). A phosphoserine mark is found at S37 and S41. An N-linked (GlcNAc...) asparagine glycan is attached at N49. A helical transmembrane segment spans residues 73 to 93; that stretch reads TVPLVKLQVIACLIMFVVFGM. The Cytoplasmic portion of the chain corresponds to 94–144; that stretch reads NDQTVGALLPTLIEYYHISRVDVSNVFIVQLCGYVMASLSKERLNKHFGMR. A helical membrane pass occupies residues 145 to 165; that stretch reads GGMLLAAGLCIVFLIILATAP. Topologically, residues 166–167 are lumenal; the sequence is SS. The chain crosses the membrane as a helical span at residues 168 to 188; that stretch reads FYVCMFCGLPLGLGIGILDST. Residues 189-205 are Cytoplasmic-facing; sequence GNVLMGSLLVHKNELMG. Residues 206–226 traverse the membrane as a helical segment; sequence IMHGLYGAAAMVTPPLVSYFV. Topologically, residues 227-232 are lumenal; it reads EWGHWS. A helical membrane pass occupies residues 233 to 253; that stretch reads LFFLIPLFFSIIGMIVIFPAF. At 254–300 the chain is on the cytoplasmic side; the sequence is KFETASKYDYLCSVENKESNNDVEEAGDNSLMESTKASPGFFELLRN. The helical transmembrane segment at 301–321 threads the bilayer; sequence PAIFLYSLYLFLYLGAEITTG. The Lumenal segment spans residues 322-340; it reads SWFFSYLLETKSSNKVAMS. A helical membrane pass occupies residues 341–361; it reads YIAASFWTGLTVGRLCLGFVT. The Cytoplasmic portion of the chain corresponds to 362-373; that stretch reads ERFFENEYKASK. A helical transmembrane segment spans residues 374-394; the sequence is AYAFLTLSSYTLFVLVGLINS. The Lumenal portion of the chain corresponds to 395-397; sequence SSV. Residues 398–418 traverse the membrane as a helical segment; it reads FYFVVLFFVVFCCGTFIGPLF. At 419 to 439 the chain is on the cytoplasmic side; sequence PNASIVALQVLPKRLHVSGVG. The helical transmembrane segment at 440 to 460 threads the bilayer; the sequence is VAVAVGGCGGAAIPYLAGVIA. Residues 461–462 are Lumenal-facing; that stretch reads HT. A helical transmembrane segment spans residues 463-483; the sequence is VGIQYIPLLCWIMVALFTLEW. Over 484-497 the chain is Cytoplasmic; it reads TLYPKFIKGHEEYF.

It belongs to the major facilitator superfamily.

The protein localises to the golgi apparatus. Its subcellular location is the cis-Golgi network membrane. Its function is as follows. Probable transporter. The protein is Bypass of stop codon protein 6 (BSC6) of Saccharomyces cerevisiae (strain ATCC 204508 / S288c) (Baker's yeast).